A 34-amino-acid polypeptide reads, in one-letter code: Photosystem II reaction center protein M (34 aa).

The chain crosses the membrane as a helical span at residues isoleucine 5–isoleucine 25.

Belongs to the PsbM family. In terms of assembly, PSII is composed of 1 copy each of membrane proteins PsbA, PsbB, PsbC, PsbD, PsbE, PsbF, PsbH, PsbI, PsbJ, PsbK, PsbL, PsbM, PsbT, PsbX, PsbY, PsbZ, Psb30/Ycf12, at least 3 peripheral proteins of the oxygen-evolving complex and a large number of cofactors. It forms dimeric complexes.

It is found in the plastid. It localises to the chloroplast thylakoid membrane. One of the components of the core complex of photosystem II (PSII). PSII is a light-driven water:plastoquinone oxidoreductase that uses light energy to abstract electrons from H(2)O, generating O(2) and a proton gradient subsequently used for ATP formation. It consists of a core antenna complex that captures photons, and an electron transfer chain that converts photonic excitation into a charge separation. This subunit is found at the monomer-monomer interface. This chain is Photosystem II reaction center protein M, found in Ceratophyllum demersum (Rigid hornwort).